Reading from the N-terminus, the 493-residue chain is 3-octaprenyl-4-hydroxybenzoate carboxy-lyase (493 aa).

Asn-175 lines the Mn(2+) pocket. Residues 178–180, 192–194, and 197–198 each bind prenylated FMN; these read IYR, RWL, and RG. Residue Glu-241 coordinates Mn(2+). The Proton donor role is filled by Asp-290.

The protein belongs to the UbiD family. As to quaternary structure, homohexamer. Prenylated FMN serves as cofactor. It depends on Mn(2+) as a cofactor.

It is found in the cell membrane. The catalysed reaction is a 4-hydroxy-3-(all-trans-polyprenyl)benzoate + H(+) = a 2-(all-trans-polyprenyl)phenol + CO2. The protein operates within cofactor biosynthesis; ubiquinone biosynthesis. In terms of biological role, catalyzes the decarboxylation of 3-octaprenyl-4-hydroxy benzoate to 2-octaprenylphenol, an intermediate step in ubiquinone biosynthesis. This chain is 3-octaprenyl-4-hydroxybenzoate carboxy-lyase, found in Photorhabdus laumondii subsp. laumondii (strain DSM 15139 / CIP 105565 / TT01) (Photorhabdus luminescens subsp. laumondii).